Here is a 262-residue protein sequence, read N- to C-terminus: Ribosomal RNA small subunit methyltransferase A (262 aa).

S-adenosyl-L-methionine contacts are provided by N20, L22, G47, E68, D90, and N110.

This sequence belongs to the class I-like SAM-binding methyltransferase superfamily. rRNA adenine N(6)-methyltransferase family. RsmA subfamily.

It is found in the cytoplasm. The catalysed reaction is adenosine(1518)/adenosine(1519) in 16S rRNA + 4 S-adenosyl-L-methionine = N(6)-dimethyladenosine(1518)/N(6)-dimethyladenosine(1519) in 16S rRNA + 4 S-adenosyl-L-homocysteine + 4 H(+). Specifically dimethylates two adjacent adenosines (A1518 and A1519) in the loop of a conserved hairpin near the 3'-end of 16S rRNA in the 30S particle. May play a critical role in biogenesis of 30S subunits. The protein is Ribosomal RNA small subunit methyltransferase A of Chlorobium phaeobacteroides (strain BS1).